Reading from the N-terminus, the 284-residue chain is Bifunctional protein FolD (284 aa).

NADP(+)-binding positions include 166-168 (GAS) and Ile-232.

This sequence belongs to the tetrahydrofolate dehydrogenase/cyclohydrolase family. In terms of assembly, homodimer.

It carries out the reaction (6R)-5,10-methylene-5,6,7,8-tetrahydrofolate + NADP(+) = (6R)-5,10-methenyltetrahydrofolate + NADPH. It catalyses the reaction (6R)-5,10-methenyltetrahydrofolate + H2O = (6R)-10-formyltetrahydrofolate + H(+). It functions in the pathway one-carbon metabolism; tetrahydrofolate interconversion. In terms of biological role, catalyzes the oxidation of 5,10-methylenetetrahydrofolate to 5,10-methenyltetrahydrofolate and then the hydrolysis of 5,10-methenyltetrahydrofolate to 10-formyltetrahydrofolate. This chain is Bifunctional protein FolD, found in Shewanella halifaxensis (strain HAW-EB4).